Here is a 117-residue protein sequence, read N- to C-terminus: Large ribosomal subunit protein eL30B (117 aa).

Positions 1-14 are enriched in low complexity; that stretch reads MSAAPTTAPVAAVS. The interval 1–22 is disordered; sequence MSAAPTTAPVAAVSKKGKKSGD.

This sequence belongs to the eukaryotic ribosomal protein eL30 family. Component of the large ribosomal subunit (LSU). Mature yeast ribosomes consist of a small (40S) and a large (60S) subunit. The 40S small subunit contains 1 molecule of ribosomal RNA (18S rRNA) and at least 33 different proteins. The large 60S subunit contains 3 rRNA molecules (25S, 5.8S and 5S rRNA) and at least 46 different proteins.

The protein localises to the cytoplasm. In terms of biological role, component of the ribosome, a large ribonucleoprotein complex responsible for the synthesis of proteins in the cell. The small ribosomal subunit (SSU) binds messenger RNAs (mRNAs) and translates the encoded message by selecting cognate aminoacyl-transfer RNA (tRNA) molecules. The large subunit (LSU) contains the ribosomal catalytic site termed the peptidyl transferase center (PTC), which catalyzes the formation of peptide bonds, thereby polymerizing the amino acids delivered by tRNAs into a polypeptide chain. The nascent polypeptides leave the ribosome through a tunnel in the LSU and interact with protein factors that function in enzymatic processing, targeting, and the membrane insertion of nascent chains at the exit of the ribosomal tunnel. The sequence is that of Large ribosomal subunit protein eL30B (rpl3002) from Schizosaccharomyces pombe (strain 972 / ATCC 24843) (Fission yeast).